The following is a 237-amino-acid chain: HTH-type transcriptional regulator GmuR (237 aa).

Residues 1 to 69 (MNKYEIIANE…RGHGTFIIQS (69 aa)) form the HTH gntR-type domain. Positions 29–48 (EVSLAKEFNSSRMTMKRALD) form a DNA-binding region, H-T-H motif.

The protein resides in the cytoplasm. Its function is as follows. Transcriptional repressor of the gmuBACDREFG operon which is involved in the uptake and degradation of glucomannan. The polypeptide is HTH-type transcriptional regulator GmuR (gmuR) (Bacillus subtilis (strain 168)).